The following is a 418-amino-acid chain: Tyrosine--tRNA ligase (418 aa).

The 'HIGH' region motif lies at 42–51 (PTAPDLHLGH). Residues 226-230 (KMSKS) carry the 'KMSKS' region motif. ATP is bound at residue K229. One can recognise an S4 RNA-binding domain in the interval 339 to 400 (VRLVALLTKS…GKRNFAKVRL (62 aa)).

Belongs to the class-I aminoacyl-tRNA synthetase family. TyrS type 2 subfamily. In terms of assembly, homodimer.

The protein resides in the cytoplasm. It carries out the reaction tRNA(Tyr) + L-tyrosine + ATP = L-tyrosyl-tRNA(Tyr) + AMP + diphosphate + H(+). Catalyzes the attachment of tyrosine to tRNA(Tyr) in a two-step reaction: tyrosine is first activated by ATP to form Tyr-AMP and then transferred to the acceptor end of tRNA(Tyr). The chain is Tyrosine--tRNA ligase from Xylella fastidiosa (strain 9a5c).